Consider the following 1816-residue polypeptide: Kinesin-like protein KIF1B (1816 aa).

Position 2 is an N-acetylserine (serine 2). The Kinesin motor domain occupies 5 to 354 (SVKVAVRVRP…LRYADRAKQI (350 aa)). ATP is bound at residue 97–104 (GQTGAGKS). Residues 270–350 (NINKSLTTLG…TLSTLRYADR (81 aa)) form an interaction with KIFBP region. The disordered stretch occupies residues 431-450 (FSTASMGSLTSSPSSCSLNS). The span at 432 to 450 (STASMGSLTSSPSSCSLNS) shows a compositional bias: low complexity. Residues 470-512 (GEEAIERLKESEKIIAELNETWEEKLRKTEAIRMEREALLAEM) adopt a coiled-coil conformation. Positions 556-612 (TRVGQADAERRQDIVLSGAHIKEEHCIFRSERNNTGEVIVTLEPCERSETYVNGKRV) constitute an FHA domain. Residues threonine 647 and threonine 652 each carry the phosphothreonine modification. Residues 672-731 (IDMKQEMEKRLQEMEILYKREKEEADLLLEQQRLDYESKLQALQKQVETRSLAAETTEEE) are a coiled coil. 5 positions are modified to phosphoserine: serine 1054, serine 1057, serine 1416, serine 1454, and serine 1487. Residues 1550–1570 (STTTFESAITPSESSGYDSAD) form a disordered region. 4 positions are modified to phosphoserine: serine 1573, serine 1603, serine 1610, and serine 1613. The span at 1620–1637 (SVSSFSSSTLTPSSTCPS) shows a compositional bias: low complexity. The interval 1620-1659 (SVSSFSSSTLTPSSTCPSLVDSRSSSMDQKTPEANSRASS) is disordered. The segment covering 1640–1659 (DSRSSSMDQKTPEANSRASS) has biased composition (polar residues). The 99-residue stretch at 1701-1799 (VVSKKGYLHF…WLYAFNPLLA (99 aa)) folds into the PH domain.

The protein belongs to the TRAFAC class myosin-kinesin ATPase superfamily. Kinesin family. Unc-104 subfamily. As to quaternary structure, monomer. Interacts with KIFBP; positively regulates KIF1B microtubule motor activity. Interacts (via C-terminus end of the kinesin-motor domain) with CHP1; the interaction occurs in a calcium-dependent manner. Interacts with MADD (via death domain); links this isoform of KIF1B to Rab3-carrying vesicles in anterograde synaptic vesicle transport. In terms of tissue distribution, expressed in the brain with lower expression in testis and liver (at protein level). Strongly expressed in the brain and ovary, with lower expression in lung, kidney, uterus, testis and liver. As to expression, isoform 2 is expressed in non-neuronal tissues.

It localises to the cytoplasm. The protein resides in the cytoskeleton. It is found in the cytoplasmic vesicle. The protein localises to the secretory vesicle. Its subcellular location is the synaptic vesicle membrane. It localises to the lysosome. It carries out the reaction ATP + H2O + a kinesin associated with a microtubule at position (n) = ADP + phosphate a kinesin associated with a microtubule at position (n+1, toward the plus end).. In terms of biological role, has a plus-end-directed microtubule motor activity and functions as a motor for transport of vesicles and organelles along microtubules. Functionally, has a plus-end-directed microtubule motor activity and functions as a motor for anterograde synaptic vesicle transport along axonal microtubules from the cell body to the presynapse in neuronal cells. Its function is as follows. Has a plus-end-directed microtubule motor activity and functions as a motor for the translocation of lysosomes from perinuclear regions to the cell periphery. In Rattus norvegicus (Rat), this protein is Kinesin-like protein KIF1B.